The chain runs to 370 residues: Cyclic AMP-responsive element-binding protein 3-like protein 4 (370 aa).

The interval 1 to 55 (MELGCPELLEPPEDIFSTGSFLELGFNGPASKVPVTRGLQKSEPDDFLNLFIDPN) is required for transcriptional activation. At 1–271 (MELGCPELLE…QTSSRAAQTS (271 aa)) the chain is on the cytoplasmic side. The disordered stretch occupies residues 61–85 (ETSPGRDSGVSEDPGSPAQQASSSP). The span at 76–85 (SPAQQASSSP) shows a compositional bias: low complexity. Residues 193-256 (ILKKIRRKIR…IFLMEQVRQL (64 aa)) enclose the bZIP domain. Positions 195–234 (KKIRRKIRNKQSAQDSRRRKKEYLDGLESRVAACSEQNQK) are basic motif. The interval 235-256 (LQRKVQELERQNIFLMEQVRQL) is leucine-zipper. A helical; Signal-anchor for type II membrane protein membrane pass occupies residues 272–292 (TCVLILLFSLALIILPSFSPF). At 293 to 370 (QGQSEARPED…IRGMVHTDEM (78 aa)) the chain is on the lumenal side. N-linked (GlcNAc...) asparagine glycosylation is found at Asn-318 and Asn-342.

This sequence belongs to the bZIP family. ATF subfamily. In terms of assembly, binds DNA as a dimer. Forms a heterodimer with CREM isoform Tau. Post-translationally, controlled by regulated intramembrane proteolysis (RIP). Following ER stress a fragment containing the cytoplasmic transcription factor domain is released by proteolysis. The cleavage seems to be performed sequentially by site-1 and site-2 proteases (PS1 and PS2). PS1 cleavage may be suppressed by a determinant in the C-terminal region. As to expression, predominantly expressed at high levels in testis with isoform 2 being the predominant isoform. Specifically expressed in postmeiotic spermatids and accumulates in the mid/late stage (at protein level). Ubiquitously expressed at low levels.

The protein resides in the endoplasmic reticulum membrane. The protein localises to the cytoplasmic vesicle. It is found in the secretory vesicle. It localises to the acrosome inner membrane. Its subcellular location is the nucleus. In terms of biological role, transcriptional activator that may play a role in the unfolded protein response of the testis. Proposed to be involved in spermiogenesis. May be involved in regulating the maturation of sperm head nuclei. Alternatively proposed to be a paternally delivered transcription factor that may function in early zygotic gene activation. Increases the binding of CREM isoform Tau with CRE. The CREM isoform Tau-CREB3L4 heterodimer functions through CRE but not through UPRE and may recruit HIRA to CRE to regulate histone exchange. This chain is Cyclic AMP-responsive element-binding protein 3-like protein 4 (Creb3l4), found in Mus musculus (Mouse).